A 436-amino-acid chain; its full sequence is Tryptophan synthase beta chain (436 aa).

K129 bears the N6-(pyridoxal phosphate)lysine mark.

It belongs to the TrpB family. Tetramer of two alpha and two beta chains. Pyridoxal 5'-phosphate is required as a cofactor.

The enzyme catalyses (1S,2R)-1-C-(indol-3-yl)glycerol 3-phosphate + L-serine = D-glyceraldehyde 3-phosphate + L-tryptophan + H2O. The protein operates within amino-acid biosynthesis; L-tryptophan biosynthesis; L-tryptophan from chorismate: step 5/5. Its function is as follows. The beta subunit is responsible for the synthesis of L-tryptophan from indole and L-serine. The chain is Tryptophan synthase beta chain from Prochlorococcus marinus (strain MIT 9313).